The chain runs to 475 residues: Ribulose bisphosphate carboxylase large chain (475 aa).

Residues 1 to 2 (MS) constitute a propeptide that is removed on maturation. P3 bears the N-acetylproline mark. At K14 the chain carries N6,N6,N6-trimethyllysine. Substrate is bound by residues N123 and T173. Catalysis depends on K175, which acts as the Proton acceptor. Position 177 (K177) interacts with substrate. The Mg(2+) site is built by K201, D203, and E204. K201 carries the post-translational modification N6-carboxylysine. H294 functions as the Proton acceptor in the catalytic mechanism. Positions 295, 327, and 379 each coordinate substrate.

It belongs to the RuBisCO large chain family. Type I subfamily. As to quaternary structure, heterohexadecamer of 8 large chains and 8 small chains; disulfide-linked. The disulfide link is formed within the large subunit homodimers. It depends on Mg(2+) as a cofactor. In terms of processing, the disulfide bond which can form in the large chain dimeric partners within the hexadecamer appears to be associated with oxidative stress and protein turnover.

Its subcellular location is the plastid. The protein localises to the chloroplast. It carries out the reaction 2 (2R)-3-phosphoglycerate + 2 H(+) = D-ribulose 1,5-bisphosphate + CO2 + H2O. The catalysed reaction is D-ribulose 1,5-bisphosphate + O2 = 2-phosphoglycolate + (2R)-3-phosphoglycerate + 2 H(+). In terms of biological role, ruBisCO catalyzes two reactions: the carboxylation of D-ribulose 1,5-bisphosphate, the primary event in carbon dioxide fixation, as well as the oxidative fragmentation of the pentose substrate in the photorespiration process. Both reactions occur simultaneously and in competition at the same active site. This chain is Ribulose bisphosphate carboxylase large chain, found in Quercus rubra (Northern red oak).